The sequence spans 383 residues: Putative glutamate--cysteine ligase 2-2 (383 aa).

It belongs to the glutamate--cysteine ligase type 2 family. YbdK subfamily.

The enzyme catalyses L-cysteine + L-glutamate + ATP = gamma-L-glutamyl-L-cysteine + ADP + phosphate + H(+). Its function is as follows. ATP-dependent carboxylate-amine ligase which exhibits weak glutamate--cysteine ligase activity. The sequence is that of Putative glutamate--cysteine ligase 2-2 from Legionella pneumophila (strain Lens).